A 687-amino-acid chain; its full sequence is Polyphosphate kinase (687 aa).

Asn-45 provides a ligand contact to ATP. The Mg(2+) site is built by Arg-375 and Arg-405. The active-site Phosphohistidine intermediate is His-435. ATP contacts are provided by Tyr-472, Arg-568, and His-596.

This sequence belongs to the polyphosphate kinase 1 (PPK1) family. Mg(2+) serves as cofactor. An intermediate of this reaction is the autophosphorylated ppk in which a phosphate is covalently linked to a histidine residue through a N-P bond.

The enzyme catalyses [phosphate](n) + ATP = [phosphate](n+1) + ADP. Functionally, catalyzes the reversible transfer of the terminal phosphate of ATP to form a long-chain polyphosphate (polyP). This is Polyphosphate kinase from Burkholderia lata (strain ATCC 17760 / DSM 23089 / LMG 22485 / NCIMB 9086 / R18194 / 383).